Reading from the N-terminus, the 712-residue chain is Glycine--tRNA ligase beta subunit (712 aa).

It belongs to the class-II aminoacyl-tRNA synthetase family. In terms of assembly, tetramer of two alpha and two beta subunits.

It is found in the cytoplasm. The enzyme catalyses tRNA(Gly) + glycine + ATP = glycyl-tRNA(Gly) + AMP + diphosphate. In Dechloromonas aromatica (strain RCB), this protein is Glycine--tRNA ligase beta subunit.